The following is a 495-amino-acid chain: UDP-N-acetylmuramate--L-alanine ligase (495 aa).

Residue 122-128 (GTHGKTT) participates in ATP binding.

Belongs to the MurCDEF family.

The protein localises to the cytoplasm. It carries out the reaction UDP-N-acetyl-alpha-D-muramate + L-alanine + ATP = UDP-N-acetyl-alpha-D-muramoyl-L-alanine + ADP + phosphate + H(+). It participates in cell wall biogenesis; peptidoglycan biosynthesis. Functionally, cell wall formation. In Mycobacterium leprae (strain TN), this protein is UDP-N-acetylmuramate--L-alanine ligase.